Here is a 302-residue protein sequence, read N- to C-terminus: Nitric oxide synthase-interacting protein (302 aa).

Ser36 is subject to Phosphoserine. Positions 55-75 (DPVVTPDGYLYEREAILEYIL) are U-box-like. The Nuclear localization signal motif lies at 78–101 (KKEIARQMKAYEKQRGARREEQKE). The tract at residues 126 to 156 (LNPFTPKAASAGNGPDDAQPGSSAGPAGKDK) is disordered.

This sequence belongs to the NOSIP family. As to quaternary structure, interacts with NOS1 and NOS3. Interacts with PP2A holoenzyme, containing PPP2CA, PPP2CB, PPP2R1A and PPP2R2A subunits.

The protein resides in the cytoplasm. Its subcellular location is the nucleus. The catalysed reaction is S-ubiquitinyl-[E2 ubiquitin-conjugating enzyme]-L-cysteine + [acceptor protein]-L-lysine = [E2 ubiquitin-conjugating enzyme]-L-cysteine + N(6)-ubiquitinyl-[acceptor protein]-L-lysine.. In terms of biological role, E3 ubiquitin-protein ligase that is essential for proper development of the forebrain, the eye, and the face. Catalyzes monoubiquitination of serine/threonine-protein phosphatase 2A (PP2A) catalytic subunit PPP2CA/PPP2CB. Negatively regulates nitric oxide production by inducing NOS1 and NOS3 translocation to actin cytoskeleton and inhibiting their enzymatic activity. This chain is Nitric oxide synthase-interacting protein (NOSIP), found in Bos taurus (Bovine).